Reading from the N-terminus, the 191-residue chain is Programmed cell death protein 6 (191 aa).

Alanine 2 carries the N-acetylalanine modification. EF-hand domains lie at 23–58 (PDQSFLWNVFQRVDKDRSGVISDTELQQALSNGTWT), 59–89 (PFNPVTVRSIISMFDRENKAGVNFSEFTGVW), 90–125 (KYITDWQNVFRTYDRDNSGMIDKNELKQALSGFGYR), 126–161 (LSDQFHDILIRKFDRQGRGQIAFDDFIQGCIVLQRL), and 162–191 (TDIFRRYDTDQDGWIQVSYEQYLSMVFSIV). The Ca(2+) site is built by aspartate 36, aspartate 38, serine 40, valine 42, and glutamate 47. Aspartate 103, aspartate 105, serine 107, methionine 109, and glutamate 114 together coordinate Ca(2+). Mg(2+)-binding residues include aspartate 169, aspartate 171, aspartate 173, and tryptophan 175.

Homodimer and heterodimer; heterodimerizes (via the EF-hand 5) with PEF1. Isoform 1 and isoform 2 self-associate; probably forming homodimers. Interacts with CPNE4 (via VWFA domain). Interacts with PDCD6IP; the interaction is calcium-dependent. Interacts with RBM22. Interacts with PLSCR4. Interacts with ANXA7 and TSG101. Interacts with DAPK1. Interacts with SEC31A; the interaction is calcium-dependent and promotes monoubiquitination of SEC31A. Interacts with ANXA11 (via N-terminus); the interaction is calcium-dependent. Interacts with PLSCR3 (via N-terminus); the interaction is calcium-dependent. Interacts with MCOLN1; the interaction is calcium-dependent. Interacts with KDR; the interaction is calcium-dependent. Interacts with HEBP2; the interaction is calcium-dependent. Interacts with TFG. Isoform 1: Interacts with SHISA5, leading to stabilize it. Isoform 2: Does not interact with SHISA5. Isoform 2: Does not interact with PDCD6IP, TSG101, ANXA7 and ANXA11.

The protein localises to the endoplasmic reticulum membrane. The protein resides in the cytoplasmic vesicle. Its subcellular location is the COPII-coated vesicle membrane. It is found in the cytoplasm. It localises to the nucleus. The protein localises to the endosome. Functionally, calcium sensor that plays a key role in processes such as endoplasmic reticulum (ER)-Golgi vesicular transport, endosomal biogenesis or membrane repair. Acts as an adapter that bridges unrelated proteins or stabilizes weak protein-protein complexes in response to calcium: calcium-binding triggers exposure of apolar surface, promoting interaction with different sets of proteins thanks to 3 different hydrophobic pockets, leading to translocation to membranes. Involved in ER-Golgi transport by promoting the association between PDCD6IP and TSG101, thereby bridging together the ESCRT-III and ESCRT-I complexes. Together with PEF1, acts as a calcium-dependent adapter for the BCR(KLHL12) complex, a complex involved in ER-Golgi transport by regulating the size of COPII coats. In response to cytosolic calcium increase, the heterodimer formed with PEF1 interacts with, and bridges together the BCR(KLHL12) complex and SEC31 (SEC31A or SEC31B), promoting monoubiquitination of SEC31 and subsequent collagen export, which is required for neural crest specification. Involved in the regulation of the distribution and function of MCOLN1 in the endosomal pathway. Promotes localization and polymerization of TFG at endoplasmic reticulum exit site. Required for T-cell receptor-, Fas-, and glucocorticoid-induced apoptosis. May mediate Ca(2+)-regulated signals along the death pathway: interaction with DAPK1 can accelerate apoptotic cell death by increasing caspase-3 activity. Its role in apoptosis may however be indirect, as suggested by knockout experiments. May inhibit KDR/VEGFR2-dependent angiogenesis; the function involves inhibition of VEGF-induced phosphorylation of the Akt signaling pathway. In case of infection by HIV-1 virus, indirectly inhibits HIV-1 production by affecting viral Gag expression and distribution. Has a lower Ca(2+) affinity than isoform 1. This chain is Programmed cell death protein 6 (PDCD6), found in Homo sapiens (Human).